An 81-amino-acid polypeptide reads, in one-letter code: Elongation factor 1-beta (81 aa).

This sequence belongs to the EF-1-beta/EF-1-delta family.

Promotes the exchange of GDP for GTP in EF-1-alpha/GDP, thus allowing the regeneration of EF-1-alpha/GTP that could then be used to form the ternary complex EF-1-alpha/GTP/AAtRNA. The polypeptide is Elongation factor 1-beta (Nanoarchaeum equitans (strain Kin4-M)).